A 604-amino-acid chain; its full sequence is Protein CBFA2T1 (604 aa).

A disordered region spans residues 32–114; it reads TEKHSTMPDS…SSSSLANQQL (83 aa). Residue serine 41 is modified to Phosphoserine. The segment covering 63 to 86 has biased composition (polar residues); sequence QGAPRTSSFTPTTLTNGTSHSPTA. Residues 95–114 are compositionally biased toward low complexity; sequence NGFSNGPSSSSSSSLANQQL. Positions 120 to 215 constitute a TAFH domain; it reads ARQLSKLKRF…NPAQYLAQHE (96 aa). The disordered stretch occupies residues 230 to 298; that stretch reads SELLLDVNEN…LPHPTPPPPQ (69 aa). Residues 238–264 show a composition bias toward basic and acidic residues; it reads ENGKRRTPDRTKENGFDREPLHSEHPS. A compositionally biased stretch (polar residues) spans 271–285; it reads SPGQRYSPNNGLSYQ. Residues 289 to 298 show a composition bias toward pro residues; sequence LPHPTPPPPQ. The segment at 337 to 383 is important for oligomerization; that stretch reads QEEMIDHRLTDREWAEEWKHLDHLLNCIMDMVEKTRRSLTVLRRCQE. Residues 337-383 form a nervy homology region 2 (NHR2) region; the sequence is QEEMIDHRLTDREWAEEWKHLDHLLNCIMDMVEKTRRSLTVLRRCQE. A disordered region spans residues 401-423; sequence DLKKGGGSSSSHSRQQSPVNPDP. Position 417 is a phosphoserine (serine 417). Residues 443–492 form a nervy homology region 3 (NHR3) region; that stretch reads EEIWKKAEEAVNEVKRQAMTELQKAVSEAERKAHDMITTERAKMERTVAE. Zn(2+) contacts are provided by cysteine 515, cysteine 518, cysteine 526, cysteine 529, cysteine 535, cysteine 539, histidine 547, and cysteine 551. The MYND-type zinc finger occupies 515 to 551; sequence CWNCGRKASETCSGCNTARYCGSFCQHKDWEKHHHIC. Polar residues predominate over residues 557–576; sequence AQQQGDTPAVSSSVTPNSGA. The segment at 557–604 is disordered; sequence AQQQGDTPAVSSSVTPNSGAGSPMDTPPAATPRSTTPGTPSTIETTPR. Residues 587–604 are compositionally biased toward low complexity; it reads TPRSTTPGTPSTIETTPR.

It belongs to the CBFA2T family. In terms of assembly, homooligomer. Homotetramerization is mediated by nervy homology region 2 (NRH2). Can interact with CBFA2T2 and CBFA2T3; heterotetramerization between members of the CBFA2T family is proposed. Interacts with TCF12, SIN3A, HDAC1, HDAC2, HDAC3, NCOR1, NCOR2. Interacts with ATN1 (via its N-terminus); the interaction enhances the transcriptional repression. Interacts (via its N-terminus) with ZBTB16; the interaction increases the transcription repression activity of ZBTB16. AML1-MTG8/ETO fusion protein interacts with CBFB. AML1-MTG8/ETO is part of a stable transcription factor complex AETFC in leukemic cells; AETFC formation seems to be involved in recruitment of EP300. AML1-MTG8/ETO nervy homology region 2-mediated oligomerization is proposed to be homotypic, required for AML1-MTG8/ETO-mediated transformation of primary hematopoietic cells and is required for AML1-MTG8/ETO interaction with TCF12. In terms of tissue distribution, most abundantly expressed in brain. Lower levels in lung, heart, testis and ovary.

It is found in the nucleus. Its function is as follows. Transcriptional corepressor which facilitates transcriptional repression via its association with DNA-binding transcription factors and recruitment of other corepressors and histone-modifying enzymes. Can repress the expression of MMP7 in a ZBTB33-dependent manner. Can repress transactivation mediated by TCF12. Acts as a negative regulator of adipogenesis. The AML1-MTG8/ETO fusion protein frequently found in leukemic cells is involved in leukemogenesis and contributes to hematopoietic stem/progenitor cell self-renewal. The sequence is that of Protein CBFA2T1 (RUNX1T1) from Homo sapiens (Human).